The primary structure comprises 591 residues: CTP synthase 1 (591 aa).

The Glutamine amidotransferase type-1 domain maps to S300–Y554. Residues C399, H526, and E528 each act as for GATase activity in the active site. A phosphoserine mark is found at S571 and S575.

Belongs to the CTP synthase family.

The enzyme catalyses UTP + L-glutamine + ATP + H2O = CTP + L-glutamate + ADP + phosphate + 2 H(+). Its pathway is pyrimidine metabolism; CTP biosynthesis via de novo pathway; CTP from UDP: step 2/2. Its function is as follows. This enzyme is involved in the de novo synthesis of CTP, a precursor of DNA, RNA and phospholipids. Catalyzes the ATP-dependent amination of UTP to CTP with either L-glutamine or ammonia as a source of nitrogen. This chain is CTP synthase 1 (ctps1), found in Danio rerio (Zebrafish).